The following is a 335-amino-acid chain: Beta-1,4-mannooligosaccharide phosphorylase (335 aa).

This sequence belongs to the glycosyl hydrolase 130 family. In terms of assembly, homohexamer in solution.

The catalysed reaction is [(1-&gt;4)-beta-D-mannosyl](n) + phosphate = [(1-&gt;4)-beta-D-mannosyl](n-1) + alpha-D-mannose 1-phosphate. In terms of biological role, catalyzes the phosphorolysis of beta-1,4-mannooligosaccharides to mannose 1-phosphate (Man1P) and shorter mannooligosaccharides. Can also catalyze the phosphorolysis of 4-O-beta-D-mannopyranosyl-D-glucopyranose (Man-Glc), but shows higher activity toward longer mannooligosaccharides. Involved in a mannan catabolic pathway which feeds into glycolysis. The polypeptide is Beta-1,4-mannooligosaccharide phosphorylase (Ruminococcus albus (strain ATCC 27210 / DSM 20455 / JCM 14654 / NCDO 2250 / 7)).